Reading from the N-terminus, the 325-residue chain is Ribonuclease Z (325 aa).

Zn(2+) is bound by residues histidine 63, histidine 65, aspartate 67, histidine 68, histidine 147, aspartate 218, and histidine 276. Aspartate 67 serves as the catalytic Proton acceptor.

The protein belongs to the RNase Z family. Homodimer. Requires Zn(2+) as cofactor.

The catalysed reaction is Endonucleolytic cleavage of RNA, removing extra 3' nucleotides from tRNA precursor, generating 3' termini of tRNAs. A 3'-hydroxy group is left at the tRNA terminus and a 5'-phosphoryl group is left at the trailer molecule.. Zinc phosphodiesterase, which displays some tRNA 3'-processing endonuclease activity. Probably involved in tRNA maturation, by removing a 3'-trailer from precursor tRNA. The chain is Ribonuclease Z from Oenococcus oeni (strain ATCC BAA-331 / PSU-1).